The primary structure comprises 265 residues: Phosphate import ATP-binding protein PstB (265 aa).

In terms of domain architecture, ABC transporter spans M18–I260. G50–S57 contributes to the ATP binding site.

It belongs to the ABC transporter superfamily. Phosphate importer (TC 3.A.1.7) family. The complex is composed of two ATP-binding proteins (PstB), two transmembrane proteins (PstC and PstA) and a solute-binding protein (PstS).

The protein resides in the cell inner membrane. It carries out the reaction phosphate(out) + ATP + H2O = ADP + 2 phosphate(in) + H(+). Functionally, part of the ABC transporter complex PstSACB involved in phosphate import. Responsible for energy coupling to the transport system. The polypeptide is Phosphate import ATP-binding protein PstB (Ruegeria pomeroyi (strain ATCC 700808 / DSM 15171 / DSS-3) (Silicibacter pomeroyi)).